The sequence spans 139 residues: D-ribose pyranase (139 aa).

The active-site Proton donor is the His20. Residues Asp28, His106, and 128–130 (YAN) contribute to the substrate site.

This sequence belongs to the RbsD / FucU family. RbsD subfamily. Homodecamer.

The protein resides in the cytoplasm. It catalyses the reaction beta-D-ribopyranose = beta-D-ribofuranose. It functions in the pathway carbohydrate metabolism; D-ribose degradation; D-ribose 5-phosphate from beta-D-ribopyranose: step 1/2. Catalyzes the interconversion of beta-pyran and beta-furan forms of D-ribose. The protein is D-ribose pyranase of Actinobacillus pleuropneumoniae serotype 5b (strain L20).